The following is a 732-amino-acid chain: Protein kinase YpkA (732 aa).

A Protein kinase domain is found at 136–408 (VAETDKFAEG…SNEARLHEFL (273 aa)). ATP is bound by residues 142 to 150 (FAEGESHIS) and Lys163. The active-site Proton acceptor is Asp270.

Belongs to the protein kinase superfamily. Ser/Thr protein kinase family.

The protein localises to the secreted. The catalysed reaction is L-seryl-[protein] + ATP = O-phospho-L-seryl-[protein] + ADP + H(+). It catalyses the reaction L-threonyl-[protein] + ATP = O-phospho-L-threonyl-[protein] + ADP + H(+). Acts as a virulence determinant. The polypeptide is Protein kinase YpkA (ypkA) (Yersinia pseudotuberculosis serotype I (strain IP32953)).